The following is a 399-amino-acid chain: Formate-dependent phosphoribosylglycinamide formyltransferase (399 aa).

Residues 21–22 (EL) and glutamate 81 each bind N(1)-(5-phospho-beta-D-ribosyl)glycinamide. Residues arginine 114, lysine 156, 161 to 166 (SSGKGQ), 196 to 199 (EGFI), and glutamate 204 contribute to the ATP site. The region spanning 119–314 (RLAAEELGLP…EFELHARAIL (196 aa)) is the ATP-grasp domain. Glutamate 273 and glutamate 285 together coordinate Mg(2+). N(1)-(5-phospho-beta-D-ribosyl)glycinamide is bound by residues aspartate 292, lysine 361, and 368-369 (RR). A disordered region spans residues 370–399 (MGVAVANGESTDQARERAKLAASKVRPTRT).

This sequence belongs to the PurK/PurT family. As to quaternary structure, homodimer.

It catalyses the reaction N(1)-(5-phospho-beta-D-ribosyl)glycinamide + formate + ATP = N(2)-formyl-N(1)-(5-phospho-beta-D-ribosyl)glycinamide + ADP + phosphate + H(+). It participates in purine metabolism; IMP biosynthesis via de novo pathway; N(2)-formyl-N(1)-(5-phospho-D-ribosyl)glycinamide from N(1)-(5-phospho-D-ribosyl)glycinamide (formate route): step 1/1. Functionally, involved in the de novo purine biosynthesis. Catalyzes the transfer of formate to 5-phospho-ribosyl-glycinamide (GAR), producing 5-phospho-ribosyl-N-formylglycinamide (FGAR). Formate is provided by PurU via hydrolysis of 10-formyl-tetrahydrofolate. The protein is Formate-dependent phosphoribosylglycinamide formyltransferase of Dechloromonas aromatica (strain RCB).